Consider the following 228-residue polypeptide: Ribose-5-phosphate isomerase A (228 aa).

Residues 27–30 (TGTT), 86–89 (DGAD), and 100–103 (KGGG) contribute to the substrate site. Glutamate 109 acts as the Proton acceptor in catalysis. A substrate-binding site is contributed by lysine 127.

This sequence belongs to the ribose 5-phosphate isomerase family. As to quaternary structure, homodimer.

The catalysed reaction is aldehydo-D-ribose 5-phosphate = D-ribulose 5-phosphate. It functions in the pathway carbohydrate degradation; pentose phosphate pathway; D-ribose 5-phosphate from D-ribulose 5-phosphate (non-oxidative stage): step 1/1. Catalyzes the reversible conversion of ribose-5-phosphate to ribulose 5-phosphate. This Borrelia hermsii (strain HS1 / DAH) protein is Ribose-5-phosphate isomerase A.